Here is a 635-residue protein sequence, read N- to C-terminus: 1-deoxy-D-xylulose-5-phosphate synthase (635 aa).

Thiamine diphosphate-binding positions include histidine 78 and 119-121; that span reads GHA. Position 151 (aspartate 151) interacts with Mg(2+). Thiamine diphosphate is bound by residues 152-153, asparagine 180, and tyrosine 291; that span reads GA. Mg(2+) is bound at residue asparagine 180. A disordered region spans residues 305 to 325; sequence PAFEDRGGTPVTRGSDGRPPY. Glutamate 374 contributes to the thiamine diphosphate binding site.

This sequence belongs to the transketolase family. DXPS subfamily. In terms of assembly, homodimer. The cofactor is Mg(2+). Thiamine diphosphate serves as cofactor.

The catalysed reaction is D-glyceraldehyde 3-phosphate + pyruvate + H(+) = 1-deoxy-D-xylulose 5-phosphate + CO2. The protein operates within metabolic intermediate biosynthesis; 1-deoxy-D-xylulose 5-phosphate biosynthesis; 1-deoxy-D-xylulose 5-phosphate from D-glyceraldehyde 3-phosphate and pyruvate: step 1/1. Its function is as follows. Catalyzes the acyloin condensation reaction between C atoms 2 and 3 of pyruvate and glyceraldehyde 3-phosphate to yield 1-deoxy-D-xylulose-5-phosphate (DXP). The sequence is that of 1-deoxy-D-xylulose-5-phosphate synthase from Rhodopirellula baltica (strain DSM 10527 / NCIMB 13988 / SH1).